We begin with the raw amino-acid sequence, 134 residues long: Large ribosomal subunit protein bL20 (134 aa).

The protein belongs to the bacterial ribosomal protein bL20 family.

In terms of biological role, binds directly to 23S ribosomal RNA and is necessary for the in vitro assembly process of the 50S ribosomal subunit. It is not involved in the protein synthesizing functions of that subunit. The sequence is that of Large ribosomal subunit protein bL20 from Rhizobium etli (strain CIAT 652).